Here is a 164-residue protein sequence, read N- to C-terminus: Large ribosomal subunit protein uL15 (164 aa).

Disordered stretches follow at residues 1-49 and 143-164; these read MTKL…SIAG and EKAG…SAEA. The span at 22-36 shows a compositional bias: gly residues; it reads RGPGSGKGKTAGRGV.

This sequence belongs to the universal ribosomal protein uL15 family. Part of the 50S ribosomal subunit.

Functionally, binds to the 23S rRNA. This is Large ribosomal subunit protein uL15 from Phenylobacterium zucineum (strain HLK1).